The following is a 141-amino-acid chain: ATP synthase epsilon chain (141 aa).

It belongs to the ATPase epsilon chain family. As to quaternary structure, F-type ATPases have 2 components, CF(1) - the catalytic core - and CF(0) - the membrane proton channel. CF(1) has five subunits: alpha(3), beta(3), gamma(1), delta(1), epsilon(1). CF(0) has three main subunits: a, b and c.

It localises to the cell inner membrane. Its function is as follows. Produces ATP from ADP in the presence of a proton gradient across the membrane. The sequence is that of ATP synthase epsilon chain from Burkholderia multivorans (strain ATCC 17616 / 249).